Reading from the N-terminus, the 534-residue chain is Bifunctional pantoate ligase/cytidylate kinase (534 aa).

Positions 1-302 (MRLLTTVAAL…LGSTRLIDNT (302 aa)) are pantoate--beta-alanine ligase. ATP is bound at residue 48 to 55 (MGSLHQGH). His-55 functions as the Proton donor in the catalytic mechanism. Gln-79 lines the (R)-pantoate pocket. Gln-79 is a beta-alanine binding site. An ATP-binding site is contributed by 172-175 (GQKD). (R)-pantoate is bound at residue Gln-178. Residues Val-201 and 209-212 (CSSR) contribute to the ATP site. Residues 303 to 534 (ILRDRQPIIA…DYYQQRLSQW (232 aa)) are cytidylate kinase.

In the N-terminal section; belongs to the pantothenate synthetase family. The protein in the C-terminal section; belongs to the cytidylate kinase family. Type 1 subfamily.

It is found in the cytoplasm. The catalysed reaction is (R)-pantoate + beta-alanine + ATP = (R)-pantothenate + AMP + diphosphate + H(+). The enzyme catalyses CMP + ATP = CDP + ADP. It carries out the reaction dCMP + ATP = dCDP + ADP. It participates in cofactor biosynthesis; (R)-pantothenate biosynthesis; (R)-pantothenate from (R)-pantoate and beta-alanine: step 1/1. In terms of biological role, catalyzes the condensation of pantoate with beta-alanine in an ATP-dependent reaction via a pantoyl-adenylate intermediate. Functionally, catalyzes the transfer of a phosphate group from ATP to either CMP or dCMP to form CDP or dCDP and ADP, respectively. This chain is Bifunctional pantoate ligase/cytidylate kinase, found in Nostoc sp. (strain PCC 7120 / SAG 25.82 / UTEX 2576).